The sequence spans 571 residues: Apolipoprotein N-acyltransferase (571 aa).

6 helical membrane-spanning segments follow: residues 13 to 33 (VVLW…IALV), 51 to 68 (LYAA…GLRY), 72 to 92 (LMFL…VLFI), 118 to 138 (LVAA…FTGI), 152 to 172 (MLIQ…IVCV), and 199 to 219 (LVTA…SMNA). Residues 234-527 (NELTVYEQDI…SDVIYAQPRR (294 aa)) enclose the CN hydrolase domain. E275 acts as the Proton acceptor in catalysis. The active site involves K380. The active-site Nucleophile is C430. Residues 542–562 (AGLMGAATLCGLAWMTFEWLM) form a helical membrane-spanning segment.

The protein belongs to the CN hydrolase family. Apolipoprotein N-acyltransferase subfamily.

It localises to the cell inner membrane. The enzyme catalyses N-terminal S-1,2-diacyl-sn-glyceryl-L-cysteinyl-[lipoprotein] + a glycerophospholipid = N-acyl-S-1,2-diacyl-sn-glyceryl-L-cysteinyl-[lipoprotein] + a 2-acyl-sn-glycero-3-phospholipid + H(+). The protein operates within protein modification; lipoprotein biosynthesis (N-acyl transfer). Functionally, catalyzes the phospholipid dependent N-acylation of the N-terminal cysteine of apolipoprotein, the last step in lipoprotein maturation. This Rhodopirellula baltica (strain DSM 10527 / NCIMB 13988 / SH1) protein is Apolipoprotein N-acyltransferase.